The sequence spans 262 residues: 3-dehydro-D-guloside 4-epimerase (262 aa).

Glu146 functions as the Proton donor/acceptor in the catalytic mechanism. Residues Glu146 and Asp179 each contribute to the Mn(2+) site. Position 182 (His182) interacts with substrate. His205 contributes to the Mn(2+) binding site. Arg211 provides a ligand contact to substrate. Glu240 functions as the Proton donor/acceptor in the catalytic mechanism. Glu240 serves as a coordination point for Mn(2+).

This sequence belongs to the hyi family. Requires Mn(2+) as cofactor.

It carries out the reaction a 3-dehydro-D-guloside = a 3-dehydro-D-glucoside. Catalyzes the epimerization at C4 of 3-dehydro-D-gulosides leading to 3-dehydro-D-glucosides. Probably functions in a metabolic pathway that transforms D-gulosides to D-glucosides. Can use methyl alpha-3-dehydro-D-glucoside and methyl beta-3-dehydro-D-glucoside as substrates in vitro. However, the actual specific physiological substrates for this metabolic pathway are unknown. Cannot act on D-psicose, D-fructose, D-tagatose, D-sorbose, L-xylulose, or L-ribulose. The sequence is that of 3-dehydro-D-guloside 4-epimerase (ycjR) from Escherichia coli (strain K12).